The chain runs to 260 residues: Trans-aconitate 2-methyltransferase (260 aa).

Belongs to the methyltransferase superfamily. Tam family.

It is found in the cytoplasm. The catalysed reaction is trans-aconitate + S-adenosyl-L-methionine = (E)-3-(methoxycarbonyl)pent-2-enedioate + S-adenosyl-L-homocysteine. Functionally, catalyzes the S-adenosylmethionine monomethyl esterification of trans-aconitate. This chain is Trans-aconitate 2-methyltransferase, found in Methylobacterium radiotolerans (strain ATCC 27329 / DSM 1819 / JCM 2831 / NBRC 15690 / NCIMB 10815 / 0-1).